The following is a 286-amino-acid chain: Pantothenate synthetase (286 aa).

31-38 (MGALHEGH) contributes to the ATP binding site. H38 functions as the Proton donor in the catalytic mechanism. Q65 serves as a coordination point for (R)-pantoate. Q65 is a beta-alanine binding site. Position 153-156 (153-156 (GEKD)) interacts with ATP. Q159 is a binding site for (R)-pantoate. ATP is bound at residue 190–193 (LSSR).

The protein belongs to the pantothenate synthetase family. As to quaternary structure, homodimer.

The protein localises to the cytoplasm. The catalysed reaction is (R)-pantoate + beta-alanine + ATP = (R)-pantothenate + AMP + diphosphate + H(+). It functions in the pathway cofactor biosynthesis; (R)-pantothenate biosynthesis; (R)-pantothenate from (R)-pantoate and beta-alanine: step 1/1. Its function is as follows. Catalyzes the condensation of pantoate with beta-alanine in an ATP-dependent reaction via a pantoyl-adenylate intermediate. The polypeptide is Pantothenate synthetase (Corynebacterium diphtheriae (strain ATCC 700971 / NCTC 13129 / Biotype gravis)).